The primary structure comprises 105 residues: Large ribosomal subunit protein uL24 (105 aa).

It belongs to the universal ribosomal protein uL24 family. Part of the 50S ribosomal subunit.

In terms of biological role, one of two assembly initiator proteins, it binds directly to the 5'-end of the 23S rRNA, where it nucleates assembly of the 50S subunit. One of the proteins that surrounds the polypeptide exit tunnel on the outside of the subunit. In Xanthomonas oryzae pv. oryzae (strain PXO99A), this protein is Large ribosomal subunit protein uL24.